The sequence spans 556 residues: Formate--tetrahydrofolate ligase (556 aa).

An ATP-binding site is contributed by 65–72 (TPAGEGKS).

The protein belongs to the formate--tetrahydrofolate ligase family.

It carries out the reaction (6S)-5,6,7,8-tetrahydrofolate + formate + ATP = (6R)-10-formyltetrahydrofolate + ADP + phosphate. The protein operates within one-carbon metabolism; tetrahydrofolate interconversion. This is Formate--tetrahydrofolate ligase from Streptococcus equi subsp. equi (strain 4047).